The primary structure comprises 218 residues: Testis expressed protein 56 (218 aa).

This Rattus norvegicus (Rat) protein is Testis expressed protein 56 (Tex56).